The sequence spans 143 residues: Large ribosomal subunit protein uL11 (143 aa).

It belongs to the universal ribosomal protein uL11 family. Part of the ribosomal stalk of the 50S ribosomal subunit. Interacts with L10 and the large rRNA to form the base of the stalk. L10 forms an elongated spine to which L12 dimers bind in a sequential fashion forming a multimeric L10(L12)X complex. One or more lysine residues are methylated.

In terms of biological role, forms part of the ribosomal stalk which helps the ribosome interact with GTP-bound translation factors. This chain is Large ribosomal subunit protein uL11, found in Marinobacter nauticus (strain ATCC 700491 / DSM 11845 / VT8) (Marinobacter aquaeolei).